The following is a 148-amino-acid chain: Trypsin inhibitor CMe (148 aa).

A signal peptide spans 1–24 (MAFKYQLLLSAAVMLAILVATATS).

The protein belongs to the protease inhibitor I6 (cereal trypsin/alpha-amylase inhibitor) family. Post-translationally, five disulfide bonds, which are essential for the inhibitor activity, are probably present. In terms of tissue distribution, expressed in the developing endosperm. Not detected in embryo, aleurone, coleoptile, roots and leaves.

It localises to the secreted. Functionally, inhibits trypsin in vitro. Probably plays a protective role through inhibition of insect midgut proteases. This chain is Trypsin inhibitor CMe (ITR1), found in Hordeum vulgare (Barley).